Reading from the N-terminus, the 471-residue chain is Adenosylhomocysteinase (471 aa).

Residues Thr60, Asp135, and Glu196 each contribute to the substrate site. NAD(+) is bound at residue 197–199 (TTT). Lys226 and Asp230 together coordinate substrate. Residues Asn231, 260–265 (GYGDVG), Glu283, Asn318, 339–341 (IGH), and Asn387 each bind NAD(+).

This sequence belongs to the adenosylhomocysteinase family. Requires NAD(+) as cofactor.

The protein localises to the cytoplasm. The catalysed reaction is S-adenosyl-L-homocysteine + H2O = L-homocysteine + adenosine. Its pathway is amino-acid biosynthesis; L-homocysteine biosynthesis; L-homocysteine from S-adenosyl-L-homocysteine: step 1/1. Its function is as follows. May play a key role in the regulation of the intracellular concentration of adenosylhomocysteine. In Chlorobaculum parvum (strain DSM 263 / NCIMB 8327) (Chlorobium vibrioforme subsp. thiosulfatophilum), this protein is Adenosylhomocysteinase.